A 148-amino-acid polypeptide reads, in one-letter code: MQVPVMLLGLLFTVAGWSIHVLAQPDAVNAPLTCCYSFTSKMIPMSRLESYKRITSSRCPKEAVVFVTKLKREVCADPKKEWVQTYIKNLDRNQMRSEPTTLFKTASALRSSAPLNVKLTRKSEANASTTFSTTTSSTSVGVTSVTVN.

Positions 1–23 (MQVPVMLLGLLFTVAGWSIHVLA) are cleaved as a signal peptide. The residue at position 24 (Q24) is a Pyrrolidone carboxylic acid. Cystine bridges form between C34–C59 and C35–C75. The N-linked (GlcNAc...) asparagine glycan is linked to N126.

The protein belongs to the intercrine beta (chemokine CC) family. As to quaternary structure, monomer or homodimer; in equilibrium. Is tethered on endothelial cells by glycosaminoglycan (GAG) side chains of proteoglycans. Interacts with TNFAIP6 (via Link domain). Processing at the N-terminus can regulate receptor and target cell selectivity. Deletion of the N-terminal residue converts it from an activator of basophil to an eosinophil chemoattractant. In terms of processing, N-Glycosylated.

The protein localises to the secreted. In terms of biological role, acts as a ligand for C-C chemokine receptor CCR2. Signals through binding and activation of CCR2 and induces a strong chemotactic response and mobilization of intracellular calcium ions. Exhibits a chemotactic activity for monocytes and basophils but not neutrophils or eosinophils. Plays an important role in mediating peripheral nerve injury-induced neuropathic pain. Increases NMDA-mediated synaptic transmission in both dopamine D1 and D2 receptor-containing neurons, which may be caused by MAPK/ERK-dependent phosphorylation of GRIN2B/NMDAR2B. This is C-C motif chemokine 2 (Ccl2) from Mus musculus (Mouse).